Here is a 488-residue protein sequence, read N- to C-terminus: ATP synthase subunit beta (488 aa).

164 to 171 is an ATP binding site; that stretch reads GGAGVGKT.

Belongs to the ATPase alpha/beta chains family. F-type ATPases have 2 components, CF(1) - the catalytic core - and CF(0) - the membrane proton channel. CF(1) has five subunits: alpha(3), beta(3), gamma(1), delta(1), epsilon(1). CF(0) has four main subunits: a(1), b(1), b'(1) and c(9-12).

The protein resides in the cellular thylakoid membrane. The catalysed reaction is ATP + H2O + 4 H(+)(in) = ADP + phosphate + 5 H(+)(out). In terms of biological role, produces ATP from ADP in the presence of a proton gradient across the membrane. The catalytic sites are hosted primarily by the beta subunits. This chain is ATP synthase subunit beta, found in Prochlorococcus marinus (strain SARG / CCMP1375 / SS120).